The following is a 424-amino-acid chain: Nicotinate phosphoribosyltransferase (424 aa).

The residue at position 242 (H242) is a Phosphohistidine; by autocatalysis.

This sequence belongs to the NAPRTase family. Transiently phosphorylated on a His residue during the reaction cycle. Phosphorylation strongly increases the affinity for substrates and increases the rate of nicotinate D-ribonucleotide production. Dephosphorylation regenerates the low-affinity form of the enzyme, leading to product release.

The enzyme catalyses nicotinate + 5-phospho-alpha-D-ribose 1-diphosphate + ATP + H2O = nicotinate beta-D-ribonucleotide + ADP + phosphate + diphosphate. Its pathway is cofactor biosynthesis; NAD(+) biosynthesis; nicotinate D-ribonucleotide from nicotinate: step 1/1. Functionally, catalyzes the synthesis of beta-nicotinate D-ribonucleotide from nicotinate and 5-phospho-D-ribose 1-phosphate at the expense of ATP. The protein is Nicotinate phosphoribosyltransferase of Bartonella bacilliformis (strain ATCC 35685 / KC583 / Herrer 020/F12,63).